A 671-amino-acid chain; its full sequence is Palmitoleoyl-protein carboxylesterase NOTUM (671 aa).

Positions 1 to 46 (MAVEQIDKMAAKAGEATNKWIKPQQPLLTLLLLLATFSQLPAVCSS) are cleaved as a signal peptide. Asparagine 95 is a glycosylation site (N-linked (GlcNAc...) asparagine). Active-site charge relay system residues include serine 237 and aspartate 338. An N-linked (GlcNAc...) asparagine glycan is attached at asparagine 372. The active-site Charge relay system is the histidine 384. A disordered region spans residues 411–592 (HSTRSRRHDK…TKSKKRHRVP (182 aa)). Positions 439-454 (NQRHQRHRQRLQRQKH) are enriched in basic residues. Over residues 470 to 486 (LSKEEREERKRLRQEQR) the composition is skewed to basic and acidic residues. The segment covering 487-497 (QRRKQRRRQQQ) has biased composition (basic residues). The span at 505–514 (QEHRNKKDNS) shows a compositional bias: basic and acidic residues. Residues 570–583 (PQKTRSSNNASAGT) are compositionally biased toward polar residues. Asparagine 578 and asparagine 612 each carry an N-linked (GlcNAc...) asparagine glycan.

It belongs to the pectinacetylesterase family. Notum subfamily.

Its subcellular location is the secreted. The protein resides in the cell surface. The enzyme catalyses [Wnt protein]-O-(9Z)-hexadecenoyl-L-serine + H2O = [Wnt protein]-L-serine + (9Z)-hexadecenoate + H(+). Functionally, carboxylesterase that acts as a key negative regulator of the Wnt signaling pathway by specifically mediating depalmitoleoylation of WNT proteins. Serine palmitoleoylation of WNT proteins is required for efficient binding to frizzled receptors. Also acts as a regulator of long-range activity of Hedgehog (hh), possibly by regulating the switch between low and high level hh pathway signaling. This chain is Palmitoleoyl-protein carboxylesterase NOTUM, found in Drosophila melanogaster (Fruit fly).